Reading from the N-terminus, the 31-residue chain is Cyclotide vpub-B (31 aa).

The segment at residues 1–31 is a cross-link (cyclopeptide (Gly-Asn)); that stretch reads GIIPCGESCVFIPCITSVVGCSCKSKVCYKN. 3 cysteine pairs are disulfide-bonded: Cys5–Cys21, Cys9–Cys23, and Cys14–Cys28.

It belongs to the cyclotide family. Bracelet subfamily. Post-translationally, this is a cyclic peptide.

Its function is as follows. Probably participates in a plant defense mechanism. The protein is Cyclotide vpub-B of Viola pubescens (Downy yellow violet).